Consider the following 400-residue polypeptide: Probable peptidoglycan glycosyltransferase FtsW (400 aa).

11 helical membrane passes run 30–50 (LSVL…SIGI), 65–84 (QAAY…RIRL), 92–112 (GLLL…GVGV), 123–143 (LGLF…LYLA), 157–177 (FAGF…LLME), 179–199 (DFGA…LAGA), 201–221 (LWQF…LAIT), 247–267 (TQSL…GASV), 280–300 (FLFA…VVLL), 321–341 (LFGA…AFIN), and 356–376 (LPLM…VGLL).

It belongs to the SEDS family. FtsW subfamily.

The protein resides in the cell inner membrane. It carries out the reaction [GlcNAc-(1-&gt;4)-Mur2Ac(oyl-L-Ala-gamma-D-Glu-L-Lys-D-Ala-D-Ala)](n)-di-trans,octa-cis-undecaprenyl diphosphate + beta-D-GlcNAc-(1-&gt;4)-Mur2Ac(oyl-L-Ala-gamma-D-Glu-L-Lys-D-Ala-D-Ala)-di-trans,octa-cis-undecaprenyl diphosphate = [GlcNAc-(1-&gt;4)-Mur2Ac(oyl-L-Ala-gamma-D-Glu-L-Lys-D-Ala-D-Ala)](n+1)-di-trans,octa-cis-undecaprenyl diphosphate + di-trans,octa-cis-undecaprenyl diphosphate + H(+). The protein operates within cell wall biogenesis; peptidoglycan biosynthesis. Peptidoglycan polymerase that is essential for cell division. The sequence is that of Probable peptidoglycan glycosyltransferase FtsW from Thioalkalivibrio sulfidiphilus (strain HL-EbGR7).